The chain runs to 449 residues: N-succinylarginine dihydrolase (449 aa).

Substrate-binding positions include 19–28 (GGLSYGNVAS), N110, and 137–138 (HR). The interval 23–43 (YGNVASQSNSQQASNPREAAR) is disordered. The segment covering 27–37 (ASQSNSQQASN) has biased composition (low complexity). The active site involves E174. R214 is a substrate binding site. H250 is an active-site residue. Substrate contacts are provided by D252 and N365. C371 serves as the catalytic Nucleophile.

Belongs to the succinylarginine dihydrolase family. As to quaternary structure, homodimer.

The enzyme catalyses N(2)-succinyl-L-arginine + 2 H2O + 2 H(+) = N(2)-succinyl-L-ornithine + 2 NH4(+) + CO2. Its pathway is amino-acid degradation; L-arginine degradation via AST pathway; L-glutamate and succinate from L-arginine: step 2/5. Functionally, catalyzes the hydrolysis of N(2)-succinylarginine into N(2)-succinylornithine, ammonia and CO(2). The sequence is that of N-succinylarginine dihydrolase from Pseudomonas putida (strain ATCC 700007 / DSM 6899 / JCM 31910 / BCRC 17059 / LMG 24140 / F1).